A 599-amino-acid chain; its full sequence is Elongation factor 4 (599 aa).

Residues 2-184 (KNIRNFSIIA…RLVRDIPPPE (183 aa)) form the tr-type G domain. GTP contacts are provided by residues 14–19 (DHGKST) and 131–134 (NKID).

Belongs to the TRAFAC class translation factor GTPase superfamily. Classic translation factor GTPase family. LepA subfamily.

The protein localises to the cell inner membrane. The enzyme catalyses GTP + H2O = GDP + phosphate + H(+). Functionally, required for accurate and efficient protein synthesis under certain stress conditions. May act as a fidelity factor of the translation reaction, by catalyzing a one-codon backward translocation of tRNAs on improperly translocated ribosomes. Back-translocation proceeds from a post-translocation (POST) complex to a pre-translocation (PRE) complex, thus giving elongation factor G a second chance to translocate the tRNAs correctly. Binds to ribosomes in a GTP-dependent manner. The chain is Elongation factor 4 from Sodalis glossinidius (strain morsitans).